The primary structure comprises 440 residues: NK1 transcription factor-related protein 1 (440 aa).

The span at 1-13 shows a compositional bias: low complexity; it reads MSTSGPAAPGDVP. Disordered stretches follow at residues 1 to 82, 145 to 291, and 342 to 387; these read MSTS…RPTS, GVAA…PRRA, and KWKK…PMGA. Positions 14-31 are enriched in pro residues; it reads ALPPPPPGPGSGPAPPAP. 2 stretches are compositionally biased toward low complexity: residues 62 to 74 and 145 to 158; these read VPAVPEGAGAARP and GVAAAAGAEPTSAG. Residues 170 to 181 show a composition bias toward polar residues; the sequence is GYSSGSGRSPTA. Positions 182-198 are enriched in acidic residues; that stretch reads DSEDEAPEDEDEEEAPE. Positions 210–222 are enriched in gly residues; that stretch reads GGSGGLGARGSGC. Positions 237-269 are enriched in low complexity; sequence AAPGPRGNSPGAPGPPATATGAGSAGSTPQGAA. Residues 288–347 constitute a DNA-binding region (homeobox); it reads PRRARTAFTYEQLVALENKFKATRYLSVCERLNLALSLSLTETQVKIWFQNRRTKWKKQN. The span at 356-374 shows a compositional bias: gly residues; the sequence is TGGGGGPGPGAGPGAGLPG.

This sequence belongs to the NK-1 homeobox family.

It localises to the nucleus. In terms of biological role, may be required for the coordinated crosstalk of factors involved in the maintenance of energy homeostasis, possibly by regulating the transcription of specific factors involved in energy balance. In Mus musculus (Mouse), this protein is NK1 transcription factor-related protein 1.